The chain runs to 165 residues: Copper-resistant cuproprotein CopI (165 aa).

Residues M1–A23 form the signal peptide. Residues A25–D42 are compositionally biased toward basic and acidic residues. The segment at A25–D50 is disordered. H93, C148, H153, and M158 together coordinate Cu(2+).

The protein belongs to the CopI family. As to quaternary structure, monomer.

The protein resides in the periplasm. Involved in copper tolerance. Required for copper resistance under both aerobic and anaerobic photosynthetic growth conditions. Binds copper. Could be an important defense against copper in the periplasm and may protect not only c type cytochromes but also other proteins with cysteine residues from copper ions that may catalyze nonnative disulfide bond formation. This chain is Copper-resistant cuproprotein CopI, found in Rubrivivax gelatinosus (Rhodocyclus gelatinosus).